Consider the following 467-residue polypeptide: Ammonium transporter Rh type C (467 aa).

Over 1–9 (MAWNTNLRW) the chain is Cytoplasmic. The helical transmembrane segment at 10 to 30 (RLPLLCLVLEVAMVVLFGLFV) threads the bilayer. The Extracellular segment spans residues 31–61 (RYSPDADSSWSNEKRKGNITSDLENEFYYRY). Asn-48 is a glycosylation site (N-linked (GlcNAc...) asparagine). A helical membrane pass occupies residues 62-82 (PSFQDVHVMVFLGFGFLMTFL). The Cytoplasmic portion of the chain corresponds to 83-86 (QRYG). Residues 87-107 (YCALGFNFLLAALGVQWALLM) traverse the membrane as a helical segment. At 108-131 (QGWFQYTKDRLILLGIKNLIDADS) the chain is on the extracellular side. Helical transmembrane passes span 132–152 (CVAS…PVQM) and 153–173 (LLMT…LLHV). Over 174–179 (LEVKDA) the chain is Extracellular. Residues 180-200 (GGSITIHIFGAYFGLTVTWIL) form a helical membrane-spanning segment. Residues 201 to 219 (YRHNLDHSRERQSSVYHSN) lie on the Cytoplasmic side of the membrane. A helical transmembrane segment spans residues 220–240 (LFAMIGTLFLWIYWPSFNSAM). Over 241–251 (SNYGDAQHRAA) the chain is Extracellular. The helical transmembrane segment at 252-272 (INTYCSLAASVLTSVAMSSVL) threads the bilayer. The Cytoplasmic portion of the chain corresponds to 273-282 (HKKGKLDMVH). A helical transmembrane segment spans residues 283–303 (IQNATLAGGVGVGTAAEMMLM). A topological domain (extracellular) is located at residue Pro-304. A helical transmembrane segment spans residues 305-325 (YGALIVGFICGAVSTLGFVYL). The Cytoplasmic portion of the chain corresponds to 326–343 (TPFLESRLRIQDTCGIHN). Residues 344 to 364 (LHGIPGLIGAIVGAVTAAYAS) form a helical membrane-spanning segment. Over 365–391 (PDGDRGFVYPFGFHNEKDEKVQGRFQA) the chain is Extracellular. The chain crosses the membrane as a helical span at residues 392 to 412 (FGLLLTLAIAMVGGTIMGLIL). Residues 413 to 467 (KLPFWGQAMDEDCFDDSIYWEMHEEKSSSPEDHTHKPSVPTEPVEQPTSSATLAP) are Cytoplasmic-facing. Positions 436 to 447 (EEKSSSPEDHTH) are enriched in basic and acidic residues. Residues 436 to 467 (EEKSSSPEDHTHKPSVPTEPVEQPTSSATLAP) form a disordered region. Polar residues predominate over residues 458 to 467 (QPTSSATLAP).

This sequence belongs to the ammonium transporter (TC 2.A.49) family. Rh subfamily. In terms of assembly, homotrimer. N-glycosylated.

The protein localises to the cell membrane. Its subcellular location is the apical cell membrane. It carries out the reaction NH4(+)(in) = NH4(+)(out). It catalyses the reaction methylamine(out) = methylamine(in). The enzyme catalyses CO2(out) = CO2(in). Functionally, ammonium transporter involved in the maintenance of acid-base homeostasis. Transports ammonium and its related derivative methylammonium across the plasma membrane of epithelial cells likely contributing to renal transepithelial ammonia transport and ammonia metabolism. Postulated to primarily mediate an electroneutral bidirectional transport of NH3 ammonia species according to a mechanism that implies interaction of an NH4(+) ion with acidic residues of the pore entry followed by dissociation of NH4(+) into NH3 and H(+). As a result NH3 transits through the central pore and is protonated on the extracellular side reforming NH4(+). May act as a CO2 channel providing for renal acid secretion. This chain is Ammonium transporter Rh type C (RHCG), found in Oryctolagus cuniculus (Rabbit).